A 294-amino-acid polypeptide reads, in one-letter code: 2,4-diacetylphloroglucinol hydrolase (294 aa).

The Zn(2+) site is built by H129, E160, H270, and E274.

Belongs to the DAPG/phloretin hydrolase family. As to quaternary structure, homodimer. The cofactor is Zn(2+).

It carries out the reaction 2,4-diacetylphloroglucinol + H2O = 2-acetylphloroglucinol + acetate. Its activity is regulated as follows. Specifically and significantly activated by CoCl(2). Competitively inhibited by MAPG, but not by 2-hydroxy- and 4-hydroxyacetophenone. In terms of biological role, hydrolase that specifically degrades the potent antimicrobial compound 2,4-diacetylphloroglucinol (DAPG) to equimolar amounts of mildly toxic monoacetylphloroglucinol (MAPG) and acetate. This chain is 2,4-diacetylphloroglucinol hydrolase, found in Pseudomonas sp.